The following is a 262-amino-acid chain: MNLLTLQQMKERGEKIAVLTSYDASFAALSDKAGVDVLLVGDSLGMTMQGHANTLAVSLRDMEYHTRCVANGTQHAFIVTDMPFGSFQKTPEQAFENAVLLMAAGAQMVKVEGGAIMLETVRFLVERGIPVCGHLGLTPQSVHQFGGYRVQARDEAAARQLLDDAKALAAAGAGMLVLEMVPAALAAAVSQAVHIPVIGIGAGKYCDGQVLVLQDMLGIYAGKSPRFVRNFMQGAGSIEQAICDYVAAVKAQTFPGIEHTFE.

Mg(2+) is bound by residues Asp-42 and Asp-81. 3-methyl-2-oxobutanoate contacts are provided by residues 42–43 (DS), Asp-81, and Lys-110. Residue Glu-112 participates in Mg(2+) binding. Glu-179 (proton acceptor) is an active-site residue.

Belongs to the PanB family. As to quaternary structure, homodecamer; pentamer of dimers. Mg(2+) serves as cofactor.

It localises to the cytoplasm. The enzyme catalyses 3-methyl-2-oxobutanoate + (6R)-5,10-methylene-5,6,7,8-tetrahydrofolate + H2O = 2-dehydropantoate + (6S)-5,6,7,8-tetrahydrofolate. Its pathway is cofactor biosynthesis; (R)-pantothenate biosynthesis; (R)-pantoate from 3-methyl-2-oxobutanoate: step 1/2. In terms of biological role, catalyzes the reversible reaction in which hydroxymethyl group from 5,10-methylenetetrahydrofolate is transferred onto alpha-ketoisovalerate to form ketopantoate. In Methylobacillus flagellatus (strain ATCC 51484 / DSM 6875 / VKM B-1610 / KT), this protein is 3-methyl-2-oxobutanoate hydroxymethyltransferase.